The primary structure comprises 448 residues: UDP-N-acetylmuramoylalanine--D-glutamate ligase (448 aa).

112-118 provides a ligand contact to ATP; that stretch reads GSNAKST.

The protein belongs to the MurCDEF family.

Its subcellular location is the cytoplasm. The catalysed reaction is UDP-N-acetyl-alpha-D-muramoyl-L-alanine + D-glutamate + ATP = UDP-N-acetyl-alpha-D-muramoyl-L-alanyl-D-glutamate + ADP + phosphate + H(+). Its pathway is cell wall biogenesis; peptidoglycan biosynthesis. Its function is as follows. Cell wall formation. Catalyzes the addition of glutamate to the nucleotide precursor UDP-N-acetylmuramoyl-L-alanine (UMA). The sequence is that of UDP-N-acetylmuramoylalanine--D-glutamate ligase from Acinetobacter baumannii (strain AB307-0294).